A 368-amino-acid chain; its full sequence is S-adenosylmethionine decarboxylase proenzyme 1 (368 aa).

Residues Glu-9 and Arg-12 contribute to the active site. Ser-69 (schiff-base intermediate with substrate; via pyruvic acid) is an active-site residue. Ser-69 is subject to Pyruvic acid (Ser); by autocatalysis. The active-site Proton donor; for catalytic activity is the Cys-83. Active-site proton acceptor; for processing activity residues include Ser-234 and His-247.

The protein belongs to the eukaryotic AdoMetDC family. It depends on pyruvate as a cofactor. Is synthesized initially as an inactive proenzyme. Formation of the active enzyme involves a self-maturation process in which the active site pyruvoyl group is generated from an internal serine residue via an autocatalytic post-translational modification. Two non-identical subunits are generated from the proenzyme in this reaction, and the pyruvate is formed at the N-terminus of the alpha chain, which is derived from the carboxyl end of the proenzyme. The post-translation cleavage follows an unusual pathway, termed non-hydrolytic serinolysis, in which the side chain hydroxyl group of the serine supplies its oxygen atom to form the C-terminus of the beta chain, while the remainder of the serine residue undergoes an oxidative deamination to produce ammonia and the pyruvoyl group blocking the N-terminus of the alpha chain.

The catalysed reaction is S-adenosyl-L-methionine + H(+) = S-adenosyl 3-(methylsulfanyl)propylamine + CO2. It participates in amine and polyamine biosynthesis; S-adenosylmethioninamine biosynthesis; S-adenosylmethioninamine from S-adenosyl-L-methionine: step 1/1. This is S-adenosylmethionine decarboxylase proenzyme 1 (SAMDC1) from Brassica juncea (Indian mustard).